The primary structure comprises 602 residues: Elongation factor 4 (602 aa).

The region spanning 6–188 (DRIRNFCIIA…RIVTRIPPPG (183 aa)) is the tr-type G domain. Residues 18–23 (DHGKST) and 135–138 (NKID) each bind GTP.

This sequence belongs to the TRAFAC class translation factor GTPase superfamily. Classic translation factor GTPase family. LepA subfamily.

The protein localises to the cell membrane. It catalyses the reaction GTP + H2O = GDP + phosphate + H(+). In terms of biological role, required for accurate and efficient protein synthesis under certain stress conditions. May act as a fidelity factor of the translation reaction, by catalyzing a one-codon backward translocation of tRNAs on improperly translocated ribosomes. Back-translocation proceeds from a post-translocation (POST) complex to a pre-translocation (PRE) complex, thus giving elongation factor G a second chance to translocate the tRNAs correctly. Binds to ribosomes in a GTP-dependent manner. This chain is Elongation factor 4, found in Pelotomaculum thermopropionicum (strain DSM 13744 / JCM 10971 / SI).